The primary structure comprises 516 residues: 2-isopropylmalate synthase (516 aa).

The Pyruvate carboxyltransferase domain maps to 5 to 267; it reads VIIFDTTLRD…STNIVHKEIY (263 aa). Asp-14, His-202, His-204, and Asn-238 together coordinate Mn(2+). Positions 392-516 are regulatory domain; it reads YLKFFSVQSI…NKKLKNLKKY (125 aa).

The protein belongs to the alpha-IPM synthase/homocitrate synthase family. LeuA type 1 subfamily. In terms of assembly, homodimer. The cofactor is Mn(2+).

It is found in the cytoplasm. It carries out the reaction 3-methyl-2-oxobutanoate + acetyl-CoA + H2O = (2S)-2-isopropylmalate + CoA + H(+). It participates in amino-acid biosynthesis; L-leucine biosynthesis; L-leucine from 3-methyl-2-oxobutanoate: step 1/4. Its function is as follows. Catalyzes the condensation of the acetyl group of acetyl-CoA with 3-methyl-2-oxobutanoate (2-ketoisovalerate) to form 3-carboxy-3-hydroxy-4-methylpentanoate (2-isopropylmalate). This Buchnera aphidicola subsp. Diuraphis noxia protein is 2-isopropylmalate synthase.